The primary structure comprises 816 residues: Acyl-homoserine lactone acylase QuiP (816 aa).

A signal peptide spans 1–33; it reads MASPALSHFLPRFGVAAAVAGVLSLTGCQTWNA. Catalysis depends on Ser262, which acts as the Nucleophile.

This sequence belongs to the peptidase S45 family. Heterodimer of an alpha subunit and a beta subunit processed from the same precursor.

It localises to the periplasm. It catalyses the reaction an N-acyl-L-homoserine lactone + H2O = L-homoserine lactone + a carboxylate. Catalyzes the deacylation of acyl-homoserine lactone (AHL or acyl-HSL), releasing homoserine lactone (HSL) and the corresponding fatty acid. Possesses a specificity for the degradation of long-chain acyl-HSLs (side chains of seven or more carbons in length). The polypeptide is Acyl-homoserine lactone acylase QuiP (quiP) (Pseudomonas fluorescens (strain Pf0-1)).